Reading from the N-terminus, the 94-residue chain is CRISPR-associated endoribonuclease Cas2 1 (94 aa).

Asp-8 is a Mg(2+) binding site.

Belongs to the CRISPR-associated endoribonuclease Cas2 protein family. As to quaternary structure, homodimer, forms a heterotetramer with a Cas1 homodimer. Mg(2+) serves as cofactor.

Its function is as follows. CRISPR (clustered regularly interspaced short palindromic repeat), is an adaptive immune system that provides protection against mobile genetic elements (viruses, transposable elements and conjugative plasmids). CRISPR clusters contain sequences complementary to antecedent mobile elements and target invading nucleic acids. CRISPR clusters are transcribed and processed into CRISPR RNA (crRNA). Involved in the integration of spacer DNA into the CRISPR cassette. Functions as a ssRNA-specific endoribonuclease. The sequence is that of CRISPR-associated endoribonuclease Cas2 1 (cas21) from Archaeoglobus fulgidus (strain ATCC 49558 / DSM 4304 / JCM 9628 / NBRC 100126 / VC-16).